Consider the following 41-residue polypeptide: Large ribosomal subunit protein bL36 (41 aa).

Belongs to the bacterial ribosomal protein bL36 family.

The chain is Large ribosomal subunit protein bL36 from Novosphingobium aromaticivorans (strain ATCC 700278 / DSM 12444 / CCUG 56034 / CIP 105152 / NBRC 16084 / F199).